The following is a 126-amino-acid chain: Small ribosomal subunit protein uS13 (126 aa).

Residues 98–126 (PVRGQSTKNNARTRKGRKKTVANKKKATK) are disordered. Positions 108 to 126 (ARTRKGRKKTVANKKKATK) are enriched in basic residues.

It belongs to the universal ribosomal protein uS13 family. In terms of assembly, part of the 30S ribosomal subunit. Forms a loose heterodimer with protein S19. Forms two bridges to the 50S subunit in the 70S ribosome.

Its function is as follows. Located at the top of the head of the 30S subunit, it contacts several helices of the 16S rRNA. In the 70S ribosome it contacts the 23S rRNA (bridge B1a) and protein L5 of the 50S subunit (bridge B1b), connecting the 2 subunits; these bridges are implicated in subunit movement. Contacts the tRNAs in the A and P-sites. The sequence is that of Small ribosomal subunit protein uS13 from Phocaeicola vulgatus (strain ATCC 8482 / DSM 1447 / JCM 5826 / CCUG 4940 / NBRC 14291 / NCTC 11154) (Bacteroides vulgatus).